The following is a 90-amino-acid chain: Neurotoxin LmNaTx19 (90 aa).

The signal sequence occupies residues 1–19 (MNHLILIVAMCLMVIGVQC). The region spanning 21 to 80 (KDGYLYDDVDCKFSCWDNEYCRKLCKSKKAVGGYCWRWRFSCYCTGLPDNEKTEGTYKCG) is the LCN-type CS-alpha/beta domain. 4 cysteine pairs are disulfide-bonded: Cys31–Cys79, Cys35–Cys55, Cys41–Cys62, and Cys45–Cys64.

The protein belongs to the long (4 C-C) scorpion toxin superfamily. Sodium channel inhibitor family. Alpha subfamily. In terms of tissue distribution, expressed by the venom gland.

Its subcellular location is the secreted. Functionally, binds voltage-independently at site-3 of voltage-gated sodium channels (Nav) and inhibits the inactivation of the activated channels, thereby blocking neuronal transmission. This chain is Neurotoxin LmNaTx19, found in Lychas mucronatus (Chinese swimming scorpion).